We begin with the raw amino-acid sequence, 501 residues long: Putative zinc metalloprotease TM_0890 (501 aa).

H17 provides a ligand contact to Zn(2+). E18 is a catalytic residue. H21 contacts Zn(2+). 4 helical membrane-spanning segments follow: residues 93-115 (FLIT…LPIT), 401-420 (VQTG…SAAS), 427-449 (VLTV…LPAL), and 474-496 (IIHF…LDIG). Residues 96-180 (TLAGPLFSIL…LVIIRNGEKK (85 aa)) enclose the PDZ domain.

Belongs to the peptidase M50B family. The cofactor is Zn(2+).

The protein localises to the cell inner membrane. In Thermotoga maritima (strain ATCC 43589 / DSM 3109 / JCM 10099 / NBRC 100826 / MSB8), this protein is Putative zinc metalloprotease TM_0890.